The following is a 100-amino-acid chain: Aspartyl/glutamyl-tRNA(Asn/Gln) amidotransferase subunit C (100 aa).

This sequence belongs to the GatC family. Heterotrimer of A, B and C subunits.

The catalysed reaction is L-glutamyl-tRNA(Gln) + L-glutamine + ATP + H2O = L-glutaminyl-tRNA(Gln) + L-glutamate + ADP + phosphate + H(+). The enzyme catalyses L-aspartyl-tRNA(Asn) + L-glutamine + ATP + H2O = L-asparaginyl-tRNA(Asn) + L-glutamate + ADP + phosphate + 2 H(+). Allows the formation of correctly charged Asn-tRNA(Asn) or Gln-tRNA(Gln) through the transamidation of misacylated Asp-tRNA(Asn) or Glu-tRNA(Gln) in organisms which lack either or both of asparaginyl-tRNA or glutaminyl-tRNA synthetases. The reaction takes place in the presence of glutamine and ATP through an activated phospho-Asp-tRNA(Asn) or phospho-Glu-tRNA(Gln). The chain is Aspartyl/glutamyl-tRNA(Asn/Gln) amidotransferase subunit C from Streptococcus pneumoniae (strain JJA).